We begin with the raw amino-acid sequence, 645 residues long: MQGPNVAAMGATGGTQLSFADLAHAQGAAWTPADEMSLRETTFVVVDLETTGGRTTGNDATPPDAITEIGAVKVCGGAVLGEFATLVNPQHSIPPQIVRLTGITTAMVGNAPTIDAVLPMFFEFAGDSVLVAHNAGFDIGFLRAAARRCDITWPQPQVLCTMRLARRVLSRDEAPSVRLAALARLFAVASNPTHRALDDARATVDVLHALIERVGNQGVHTYAELRSYLPNVTQAQRCKRVLAETLPHRPGVYLFRGPSGEVLYVGTAADLRRRVSQYFNGTDRRKRMTEMVMLASSIDHVECAHPLEAGVRELRMLSTHAPPYNRRSKFPYRWWWVALTDEAFPRLSVIRAPRHDRVVGPFRSRSKAAETAALLARCTGLRTCTTRLTRSARHGPACPELEVSACPAARDVTAAQYAEAVLRAAALIGGLDNAALAAAVQQVTELAERRRYESAARLRDHLATAIEALWHGQRLRALAALPELIAAKPDGPREGGYQLAVIRHGQLAAAGRAPRGVPPMPVVDAIRRGAQAILPTPAPLGGALVEEIALIARWLAEPGVRIVGVSNDAAGLASPVRSAGPWAAWAATARSAQLAGEQLSRGWQSDLPTEPHPSREQLFGRTGVDCRTGPPQPLLPGRQPFSTAG.

In terms of domain architecture, Exonuclease spans 44-207; it reads VVVDLETTGG…DDARATVDVL (164 aa). Positions 248 to 326 constitute a GIY-YIG domain; sequence HRPGVYLFRG…LSTHAPPYNR (79 aa). The segment at 603–645 is disordered; the sequence is WQSDLPTEPHPSREQLFGRTGVDCRTGPPQPLLPGRQPFSTAG. Positions 635-645 are enriched in low complexity; that stretch reads LPGRQPFSTAG.

This Mycobacterium tuberculosis (strain CDC 1551 / Oshkosh) protein is Putative bifunctional exonuclease/endonuclease protein MT2247.